The following is a 111-amino-acid chain: MIWLTLVFASLLSVAGQLCQKQATCFAAVNKRRKHIVLWLGLALACLGLAMVLWLLVLQNVPVGIAYPMLSLNFVWVTLAAVKLWHEPVSLRHWCGVAFIIGGIVILGSTV.

At 1–35 (MIWLTLVFASLLSVAGQLCQKQATCFAAVNKRRKH) the chain is on the cytoplasmic side. Residues 36-56 (IVLWLGLALACLGLAMVLWLL) form a helical membrane-spanning segment. Residues 40-109 (LGLALACLGL…IIGGIVILGS (70 aa)) enclose the EamA domain. Residues 57–60 (VLQN) are Periplasmic-facing. The helical transmembrane segment at 61–81 (VPVGIAYPMLSLNFVWVTLAA) threads the bilayer. At 82–87 (VKLWHE) the chain is on the cytoplasmic side. A helical transmembrane segment spans residues 88–108 (PVSLRHWCGVAFIIGGIVILG). Residues 109-111 (STV) lie on the Periplasmic side of the membrane.

This sequence belongs to the ArnE family. In terms of assembly, heterodimer of ArnE and ArnF.

It is found in the cell inner membrane. It participates in bacterial outer membrane biogenesis; lipopolysaccharide biosynthesis. In terms of biological role, translocates 4-amino-4-deoxy-L-arabinose-phosphoundecaprenol (alpha-L-Ara4N-phosphoundecaprenol) from the cytoplasmic to the periplasmic side of the inner membrane. The chain is Probable 4-amino-4-deoxy-L-arabinose-phosphoundecaprenol flippase subunit ArnE from Escherichia coli (strain UTI89 / UPEC).